A 259-amino-acid chain; its full sequence is Snake venom serine proteinase 2 (259 aa).

A signal peptide spans 1–18 (MVLIRVLANLLILQLSYA). A propeptide spanning residues 19–24 (QKSSEL) is cleaved from the precursor. A Peptidase S1 domain is found at 25 to 250 (IFGGRPCNRN…HLDWIQSIIA (226 aa)). 6 cysteine pairs are disulfide-bonded: Cys-31–Cys-162, Cys-49–Cys-65, Cys-97–Cys-257, Cys-141–Cys-211, Cys-173–Cys-190, and Cys-201–Cys-226. Catalysis depends on charge relay system residues His-64 and Asp-109. Ser-205 functions as the Charge relay system in the catalytic mechanism.

Belongs to the peptidase S1 family. Snake venom subfamily. Monomer. As to expression, expressed by the venom gland.

Its subcellular location is the secreted. Snake venom serine protease that may act in the hemostasis system of the prey. This is Snake venom serine proteinase 2 from Crotalus adamanteus (Eastern diamondback rattlesnake).